We begin with the raw amino-acid sequence, 476 residues long: Salicylate biosynthesis isochorismate synthase (476 aa).

Residues 181–202 (RRRPSGPTAGAQGDASAQERRQ) are disordered.

This sequence belongs to the isochorismate synthase family.

It carries out the reaction chorismate = isochorismate. The protein operates within siderophore biosynthesis; salicylate biosynthesis. Involved in the conversion of chorismate to salicylate. The sequence is that of Salicylate biosynthesis isochorismate synthase (pchA) from Pseudomonas aeruginosa (strain ATCC 15692 / DSM 22644 / CIP 104116 / JCM 14847 / LMG 12228 / 1C / PRS 101 / PAO1).